A 398-amino-acid chain; its full sequence is tRNA(Ile)-lysidine synthase (398 aa).

S25 to S30 serves as a coordination point for ATP.

It belongs to the tRNA(Ile)-lysidine synthase family.

The protein resides in the cytoplasm. The enzyme catalyses cytidine(34) in tRNA(Ile2) + L-lysine + ATP = lysidine(34) in tRNA(Ile2) + AMP + diphosphate + H(+). Ligates lysine onto the cytidine present at position 34 of the AUA codon-specific tRNA(Ile) that contains the anticodon CAU, in an ATP-dependent manner. Cytidine is converted to lysidine, thus changing the amino acid specificity of the tRNA from methionine to isoleucine. The polypeptide is tRNA(Ile)-lysidine synthase (Francisella tularensis subsp. tularensis (strain SCHU S4 / Schu 4)).